Reading from the N-terminus, the 303-residue chain is Glucose-1-phosphate thymidylyltransferase (303 aa).

Residues aspartate 108 and aspartate 222 each coordinate Mg(2+).

This sequence belongs to the glucose-1-phosphate thymidylyltransferase family. Requires Mg(2+) as cofactor.

The catalysed reaction is dTTP + alpha-D-glucose 1-phosphate + H(+) = dTDP-alpha-D-glucose + diphosphate. Its function is as follows. Catalyzes the formation of dTDP-glucose, from dTTP and glucose 1-phosphate, as well as its pyrophosphorolysis. Probably involved in the biosynthesis of the acarviose moiety of the alpha-glucosidase inhibitor acarbose. This is Glucose-1-phosphate thymidylyltransferase (acbA) from Actinoplanes sp. (strain ATCC 31044 / CBS 674.73 / SE50/110).